The following is a 466-amino-acid chain: Transcription factor SOX-10 (466 aa).

Disordered regions lie at residues 1 to 67 (MAEE…DDDK), 160 to 200 (LRMQ…QGGA), 213 to 275 (DHRH…DFGN), 344 to 375 (TVSP…QPST), and 433 to 466 (RPLY…LSRP). The span at 23-32 (LSPGSAPSLG) shows a compositional bias: low complexity. Ser24 carries the post-translational modification Phosphoserine. The interval 62–102 (EADDDKFPVCIREAVSQVLSGYDWTLVPMPVRVNGASKSKP) is dimerization (DIM). The segment at residues 104–172 (VKRPMNAFMV…QHKKDHPDYK (69 aa)) is a DNA-binding region (HMG box). Basic and acidic residues predominate over residues 160 to 173 (LRMQHKKDHPDYKY). Low complexity predominate over residues 183-200 (AAQGEAECPGGEAEQGGA). Residues 228–310 (PEHPSGQSHG…LPPNGHPGHV (83 aa)) form a transactivation domain (TAM) region. Residues 254–271 (ADPKRDGRSLGEGGKPHI) show a composition bias toward basic and acidic residues. The transactivation domain (TAC) stretch occupies residues 353–466 (KAQVKTETTG…QPVYTTLSRP (114 aa)). Polar residues predominate over residues 440–466 (SDPSPSGPQSHSPTHWEQPVYTTLSRP).

Monomer. Interacts with Armcx3 at the mitochondrial outer membrane surface. Interacts with PAX3. Expressed in oligodendroglia of the spinal tube (at protein level).

It is found in the cytoplasm. The protein localises to the nucleus. The protein resides in the mitochondrion outer membrane. Its function is as follows. Transcription factor that plays a central role in developing and mature glia. Specifically activates expression of myelin genes, during oligodendrocyte (OL) maturation, such as DUSP15 and MYRF, thereby playing a central role in oligodendrocyte maturation and CNS myelination. Once induced, MYRF cooperates with SOX10 to implement the myelination program. Transcriptional activator of MITF, acting synergistically with PAX3. Transcriptional activator of MBP, via binding to the gene promoter. The sequence is that of Transcription factor SOX-10 (Sox10) from Mus musculus (Mouse).